We begin with the raw amino-acid sequence, 117 residues long: Immunoglobulin heavy variable 1-2 (117 aa).

The signal sequence occupies residues 1–19; that stretch reads MDWTWRILFLVAAATGAHS. Gln-20 is subject to Pyrrolidone carboxylic acid. The segment at 20–44 is framework-1; it reads QVQLVQSGAEVKKPGASVKVSCKAS. In terms of domain architecture, Ig-like spans 20–117; sequence QVQLVQSGAE…DDTAVYYCAR (98 aa). The cysteines at positions 41 and 115 are disulfide-linked. Positions 45 to 52 are complementarity-determining-1; it reads GYTFTGYY. A framework-2 region spans residues 53 to 69; the sequence is MHWVRQAPGQGLEWMGW. The complementarity-determining-2 stretch occupies residues 70–77; the sequence is INPNSGGT. The tract at residues 78–115 is framework-3; it reads NYAQKFQGWVTMTRDTSISTAYMELSRLRSDDTAVYYC. The tract at residues 116 to 117 is complementarity-determining-3; that stretch reads AR.

As to quaternary structure, immunoglobulins are composed of two identical heavy chains and two identical light chains; disulfide-linked.

It localises to the secreted. Its subcellular location is the cell membrane. Its function is as follows. V region of the variable domain of immunoglobulin heavy chains that participates in the antigen recognition. Immunoglobulins, also known as antibodies, are membrane-bound or secreted glycoproteins produced by B lymphocytes. In the recognition phase of humoral immunity, the membrane-bound immunoglobulins serve as receptors which, upon binding of a specific antigen, trigger the clonal expansion and differentiation of B lymphocytes into immunoglobulins-secreting plasma cells. Secreted immunoglobulins mediate the effector phase of humoral immunity, which results in the elimination of bound antigens. The antigen binding site is formed by the variable domain of one heavy chain, together with that of its associated light chain. Thus, each immunoglobulin has two antigen binding sites with remarkable affinity for a particular antigen. The variable domains are assembled by a process called V-(D)-J rearrangement and can then be subjected to somatic hypermutations which, after exposure to antigen and selection, allow affinity maturation for a particular antigen. This Homo sapiens (Human) protein is Immunoglobulin heavy variable 1-2.